The primary structure comprises 297 residues: Dehydrodolichyl diphosphate synthase complex subunit Nus1 (297 aa).

The next 2 membrane-spanning stretches (helical) occupy residues 7 to 26 (LVWR…TSWL) and 40 to 56 (CCRA…GFTL). The span at 63–73 (GRNRRHHRHPH) shows a compositional bias: basic residues. The tract at residues 63–86 (GRNRRHHRHPHGGPGPGPGPAATH) is disordered. Residues 121–139 (IASLVVWCMAVGISYISVY) traverse the membrane as a helical segment. Asn148 and Asn275 each carry an N-linked (GlcNAc...) asparagine glycan. Residues 294 to 296 (RLG) carry the RXG motif; crucial for prenyltransferase activity motif. Residues Leu295 and Gly296 each coordinate isopentenyl diphosphate.

This sequence belongs to the UPP synthase family. As to quaternary structure, the active dehydrodolichyl diphosphate synthase complex is a heterotetramer composed of a dimer of heterodimer of DHDDS and NUS1. Interacts with NPC2. The cofactor is Mg(2+). As to expression, highly expressed in heart, liver, kidney and pancreas.

It localises to the endoplasmic reticulum membrane. It carries out the reaction n isopentenyl diphosphate + (2E,6E)-farnesyl diphosphate = a di-trans,poly-cis-polyprenyl diphosphate + n diphosphate. The protein operates within protein modification; protein glycosylation. It participates in lipid metabolism. Its function is as follows. With DHDDS, forms the dehydrodolichyl diphosphate synthase (DDS) complex, an essential component of the dolichol monophosphate (Dol-P) biosynthetic machinery. Both subunits contribute to enzymatic activity, i.e. condensation of multiple copies of isopentenyl pyrophosphate (IPP) to farnesyl pyrophosphate (FPP) to produce dehydrodolichyl diphosphate (Dedol-PP), a precursor of dolichol phosphate which is utilized as a sugar carrier in protein glycosylation in the endoplasmic reticulum (ER). Synthesizes long-chain polyprenols, mostly of C95 and C100 chain length. Regulates the glycosylation and stability of nascent NPC2, thereby promoting trafficking of LDL-derived cholesterol. Acts as a specific receptor for the N-terminus of Nogo-B, a neural and cardiovascular regulator. In Mus musculus (Mouse), this protein is Dehydrodolichyl diphosphate synthase complex subunit Nus1.